Consider the following 89-residue polypeptide: Small ribosomal subunit protein uS15 (89 aa).

It belongs to the universal ribosomal protein uS15 family. As to quaternary structure, part of the 30S ribosomal subunit. Forms a bridge to the 50S subunit in the 70S ribosome, contacting the 23S rRNA.

One of the primary rRNA binding proteins, it binds directly to 16S rRNA where it helps nucleate assembly of the platform of the 30S subunit by binding and bridging several RNA helices of the 16S rRNA. In terms of biological role, forms an intersubunit bridge (bridge B4) with the 23S rRNA of the 50S subunit in the ribosome. The sequence is that of Small ribosomal subunit protein uS15 from Dictyoglomus thermophilum (strain ATCC 35947 / DSM 3960 / H-6-12).